Consider the following 307-residue polypeptide: Probable aspartoacylase (307 aa).

Positions 13 and 16 each coordinate Zn(2+). Residues R55 and 62-63 (NR) contribute to the substrate site. H105 serves as a coordination point for Zn(2+). Substrate contacts are provided by E163 and Y276.

It belongs to the AspA/AstE family. Aspartoacylase subfamily. The cofactor is Zn(2+).

It catalyses the reaction an N-acyl-L-aspartate + H2O = a carboxylate + L-aspartate. The protein is Probable aspartoacylase of Prochlorococcus marinus (strain SARG / CCMP1375 / SS120).